A 392-amino-acid polypeptide reads, in one-letter code: Zinc finger protein ham-2 (392 aa).

2 consecutive C2H2-type zinc fingers follow at residues 16 to 39 and 43 to 66; these read FPCS…MQAH and YTCT…YRVH. The C2H2-type 3; degenerate zinc finger occupies 72–95; it reads FMCRCCNWAFPDKTSLHIHMQSML. 2 disordered regions span residues 106-130 and 278-303; these read LAKS…PFSP and HISH…HSGE. A compositionally biased stretch (polar residues) spans 112-123; the sequence is VVDSTSESGSPR. Positions 289-303 are enriched in low complexity; the sequence is SDSHISGGSSSHSGE.

It is found in the nucleus. Its function is as follows. Probable transcription factor that acts downstream of egl-15, to promote migration of the HSN motor neurons from the tail to the gonad primordium during HSN cell differentiation. This Caenorhabditis elegans protein is Zinc finger protein ham-2.